A 248-amino-acid chain; its full sequence is Molybdate/tungstate transport system permease protein WtpB (248 aa).

Residues 1 to 9 lie on the Cytoplasmic side of the membrane; that stretch reads MGGRDYTLY. A helical membrane pass occupies residues 10-30; the sequence is LFAALGSFLIVYIALPIIVIF. At 31-56 the chain is on the extracellular side; that stretch reads TKQALDFRMLVKTIHDPLVIEALRNS. In terms of domain architecture, ABC transmembrane type-1 spans 53 to 239; sequence LRNSLLTATA…GISLGIFVVL (187 aa). The helical transmembrane segment at 57–77 threads the bilayer; that stretch reads LLTATATALISLLFGVPLGYV. Topologically, residues 78–91 are cytoplasmic; it reads LARKDFRGKSLVQA. A helical membrane pass occupies residues 92 to 112; that stretch reads IIDVPIVIPHSVVGIMLLVTF. At 113–115 the chain is on the extracellular side; that stretch reads SNA. A helical transmembrane segment spans residues 116–136; the sequence is ILDSYKGIIAAMLFVSAPFAI. Residues 137–164 are Cytoplasmic-facing; sequence NSARDGFLAVDEKLEHVARTLGASKLRT. The chain crosses the membrane as a helical span at residues 165–185; that stretch reads FFSISLPIALPSIASGAIMAW. Topologically, residues 186–223 are extracellular; that stretch reads ARGISEVGAILIVAYYPKTAQVLVMEYFNNYGLRASRP. Residues 224 to 244 form a helical membrane-spanning segment; sequence ISVILMGISLGIFVVLRWLIG. The Cytoplasmic portion of the chain corresponds to 245–248; it reads KAKS.

The protein belongs to the binding-protein-dependent transport system permease family. In terms of assembly, the complex is composed of two ATP-binding proteins (WtpC), two transmembrane proteins (WtpB) and a solute-binding protein (WtpA).

It localises to the cell membrane. Functionally, part of the ABC transporter complex WtpABC involved in molybdate/tungstate import. Probably responsible for the translocation of the substrate across the membrane. This is Molybdate/tungstate transport system permease protein WtpB (wtpB) from Pyrococcus abyssi (strain GE5 / Orsay).